The sequence spans 874 residues: Alanine--tRNA ligase (874 aa).

Residues His-564, His-568, Cys-665, and His-669 each contribute to the Zn(2+) site.

This sequence belongs to the class-II aminoacyl-tRNA synthetase family. Requires Zn(2+) as cofactor.

It localises to the cytoplasm. The catalysed reaction is tRNA(Ala) + L-alanine + ATP = L-alanyl-tRNA(Ala) + AMP + diphosphate. Catalyzes the attachment of alanine to tRNA(Ala) in a two-step reaction: alanine is first activated by ATP to form Ala-AMP and then transferred to the acceptor end of tRNA(Ala). Also edits incorrectly charged Ser-tRNA(Ala) and Gly-tRNA(Ala) via its editing domain. This chain is Alanine--tRNA ligase, found in Burkholderia pseudomallei (strain 1106a).